We begin with the raw amino-acid sequence, 290 residues long: ATP synthase gamma chain (290 aa).

This sequence belongs to the ATPase gamma chain family. F-type ATPases have 2 components, CF(1) - the catalytic core - and CF(0) - the membrane proton channel. CF(1) has five subunits: alpha(3), beta(3), gamma(1), delta(1), epsilon(1). CF(0) has three main subunits: a, b and c.

Its subcellular location is the cell membrane. Produces ATP from ADP in the presence of a proton gradient across the membrane. The gamma chain is believed to be important in regulating ATPase activity and the flow of protons through the CF(0) complex. The protein is ATP synthase gamma chain of Buchnera aphidicola subsp. Schlechtendalia chinensis.